The chain runs to 390 residues: uncharacterized protein (390 aa).

12 helical membrane passes run 4-24, 40-60, 68-88, 98-118, 130-150, 159-179, 205-225, 236-256, 273-293, 295-315, 329-349, and 356-376; these read IWLFFSVMFVIGTDTFLLSPL, GWMVSAYALGYALFAFIAGPI, TVMLWGLAGFIVSTFLCGIAP, FAAGVSAAFVTPQIWASIPVI, IATAGLAASQMLGLPIGGFLA, FVLSACSLILLLILAAVMPGI, VILLAYFLFQTGNFASFSFLG, VSQIGAAMLVLGLGNMLGSLI, GMLLMGALYFALPFFPNLFLV, AGFFLTFFTAGIIFPLMMGVF, LSNAAMYAGTTVGTSIAGFLY, and GAVTGFTAILFILSMTLYQTI.

It belongs to the major facilitator superfamily.

The protein resides in the cell membrane. This is an uncharacterized protein from Bacillus subtilis (strain 168).